The chain runs to 196 residues: Calcineurin B homologous protein 2 (196 aa).

A lipid anchor (N-myristoyl glycine) is attached at G2. 4 consecutive EF-hand domains span residues 26-61 (ASLL…AVNP), 71-106 (FPDG…PKKP), 111-146 (SRRN…MVGV), and 152-187 (QLEN…MDVE). S27 is modified (phosphoserine). D124, D126, D128, K130, and E135 together coordinate Ca(2+). The Nuclear export signal signature appears at 137–148 (LQVLRLMVGVQV). Positions 165, 167, 169, and 176 each coordinate Ca(2+).

This sequence belongs to the calcineurin regulatory subunit family. CHP subfamily. Interacts with PPP3CA. Interacts with SLC9A1/NHE1; the interaction occurs in a calcium-dependent manner. In terms of tissue distribution, expressed in malignantly transformed cells but not detected in normal tissues.

The protein resides in the nucleus. The protein localises to the cytoplasm. It is found in the cell membrane. In terms of biological role, functions as an integral cofactor in cell pH regulation by controlling plasma membrane-type Na(+)/H(+) exchange activity. Binds to and activates SLC9A1/NHE1 in a serum-independent manner, thus increasing pH and protecting cells from serum deprivation-induced death. Also plays a role in the regulation of cell proliferation and tumor growth by increasing the phosphatase activity of PPP3CA in a calcium-dependent manner. Activator of the calcineurin/NFAT signaling pathway. Involved in the cytoplasmic translocation of the transcription factor NFATC3 to the nucleus. The chain is Calcineurin B homologous protein 2 (CHP2) from Homo sapiens (Human).